The chain runs to 85 residues: U4-theraphotoxin-Hhn1m (85 aa).

An N-terminal signal peptide occupies residues 1 to 22 (MKVTLIAILTCAAVLVLHTTAA). A propeptide spanning residues 23–48 (EELEAESQLVEVGMPDTELAAVDEER) is cleaved from the precursor. Cystine bridges form between C52-C66, C56-C77, and C71-C82.

This sequence belongs to the neurotoxin 12 (Hwtx-2) family. 02 (Hwtx-2) subfamily. In terms of tissue distribution, expressed by the venom gland.

Its subcellular location is the secreted. Postsynaptic neurotoxin. The chain is U4-theraphotoxin-Hhn1m from Cyriopagopus hainanus (Chinese bird spider).